We begin with the raw amino-acid sequence, 144 residues long: Deoxyuridine 5'-triphosphate nucleotidohydrolase (144 aa).

Residues 63–65, asparagine 76, and 80–82 each bind substrate; these read RSG and TVD.

The protein belongs to the dUTPase family. Mg(2+) serves as cofactor.

It catalyses the reaction dUTP + H2O = dUMP + diphosphate + H(+). Its pathway is pyrimidine metabolism; dUMP biosynthesis; dUMP from dCTP (dUTP route): step 2/2. In terms of biological role, this enzyme is involved in nucleotide metabolism: it produces dUMP, the immediate precursor of thymidine nucleotides and it decreases the intracellular concentration of dUTP so that uracil cannot be incorporated into DNA. This chain is Deoxyuridine 5'-triphosphate nucleotidohydrolase, found in Flavobacterium johnsoniae (strain ATCC 17061 / DSM 2064 / JCM 8514 / BCRC 14874 / CCUG 350202 / NBRC 14942 / NCIMB 11054 / UW101) (Cytophaga johnsonae).